The primary structure comprises 253 residues: Tryptophan synthase alpha chain (253 aa).

Residues Glu-48 and Asp-59 each act as proton acceptor in the active site.

This sequence belongs to the TrpA family. Tetramer of two alpha and two beta chains.

The catalysed reaction is (1S,2R)-1-C-(indol-3-yl)glycerol 3-phosphate + L-serine = D-glyceraldehyde 3-phosphate + L-tryptophan + H2O. It participates in amino-acid biosynthesis; L-tryptophan biosynthesis; L-tryptophan from chorismate: step 5/5. The alpha subunit is responsible for the aldol cleavage of indoleglycerol phosphate to indole and glyceraldehyde 3-phosphate. The chain is Tryptophan synthase alpha chain from Caldicellulosiruptor saccharolyticus (strain ATCC 43494 / DSM 8903 / Tp8T 6331).